The primary structure comprises 141 residues: Small ribosomal subunit protein bS6 (141 aa).

The disordered stretch occupies residues 96–141; that stretch reads VTGPSAMMKTVEREEFRKASQAGNQTTAPAASPADHAAAPASADRS. Positions 123-141 are enriched in low complexity; the sequence is APAASPADHAAAPASADRS.

It belongs to the bacterial ribosomal protein bS6 family.

Functionally, binds together with bS18 to 16S ribosomal RNA. In Verminephrobacter eiseniae (strain EF01-2), this protein is Small ribosomal subunit protein bS6.